The chain runs to 74 residues: DNA gyrase inhibitor YacG (74 aa).

Residues C7, C10, C26, and C30 each coordinate Zn(2+).

Belongs to the DNA gyrase inhibitor YacG family. Interacts with GyrB. Requires Zn(2+) as cofactor.

Its function is as follows. Inhibits all the catalytic activities of DNA gyrase by preventing its interaction with DNA. Acts by binding directly to the C-terminal domain of GyrB, which probably disrupts DNA binding by the gyrase. In Shewanella denitrificans (strain OS217 / ATCC BAA-1090 / DSM 15013), this protein is DNA gyrase inhibitor YacG.